The primary structure comprises 485 residues: Cytosol non-specific dipeptidase (485 aa).

His-76 contributes to the Zn(2+) binding site. Asp-78 is an active-site residue. Asp-115 contributes to the Zn(2+) binding site. Glu-145 acts as the Proton acceptor in catalysis. Glu-146 and Asp-169 together coordinate Zn(2+). Lys-296 bears the N6-acetyllysine mark. His-457 lines the Zn(2+) pocket.

This sequence belongs to the peptidase M20C family. Requires Zn(2+) as cofactor. Co(2+) is required as a cofactor.

The enzyme catalyses Hydrolysis of dipeptides, preferentially hydrophobic dipeptides including prolyl amino acids.. With respect to regulation, inhibited by metal chelators. Dipeptidase with broad substrate specificity. Requires dipeptide substrates with an unblocked N-terminus and the amino group in the alpha or beta position. Non-protein amino acids and proline are not accepted in the C-terminal position, whereas some dipeptide amides and formyl amino acids are hydrolyzed. Also shows cysteinylglycinase activity, which is sufficient for E.coli to utilize cysteinylglycine as a cysteine source. The sequence is that of Cytosol non-specific dipeptidase (pepD) from Escherichia coli (strain K12).